The chain runs to 75 residues: Small ribosomal subunit protein bS18 (75 aa).

Belongs to the bacterial ribosomal protein bS18 family. As to quaternary structure, part of the 30S ribosomal subunit. Forms a tight heterodimer with protein bS6.

Its function is as follows. Binds as a heterodimer with protein bS6 to the central domain of the 16S rRNA, where it helps stabilize the platform of the 30S subunit. The protein is Small ribosomal subunit protein bS18 of Shewanella halifaxensis (strain HAW-EB4).